A 766-amino-acid chain; its full sequence is Serine/threonine-protein kinase PKH1 (766 aa).

The disordered stretch occupies residues 1 to 52 (MGNRSLTEADHALLSKPLVPTSAEHTQTQEYPRPFVDGSNSQSGSELQASPQ). Residues 38–52 (GSNSQSGSELQASPQ) are compositionally biased toward polar residues. One can recognise a Protein kinase domain in the interval 125–391 (FKFGEQLGDG…IKQIKAHLFF (267 aa)). Residues 135-137 (SYS) and K154 contribute to the ATP site. The interval 156–201 (LSKEYLIRQKKVKYVTVEKLALQKLNGTKGIFKLFFTFQDEASLYF) is PIF-pocket. ATP is bound by residues 204–206 (EYA) and D210. D249 functions as the Proton acceptor in the catalytic mechanism. E253 and D267 together coordinate ATP. S294 and S296 each carry phosphoserine. Over residues 476-495 (TSQPKLGSKSSTSVRSASNN) the composition is skewed to polar residues. Disordered regions lie at residues 476-529 (TSQP…NRSR) and 725-745 (PEEGALHTKRPTSLQTRSSSN). Residues 511-521 (SVSSPSISTTS) are compositionally biased toward low complexity. Residues 735 to 745 (PTSLQTRSSSN) show a composition bias toward polar residues.

This sequence belongs to the protein kinase superfamily. AGC Ser/Thr protein kinase family. PDPK1 subfamily.

It carries out the reaction L-seryl-[protein] + ATP = O-phospho-L-seryl-[protein] + ADP + H(+). The enzyme catalyses L-threonyl-[protein] + ATP = O-phospho-L-threonyl-[protein] + ADP + H(+). Its function is as follows. Activates YPK1 by phosphorylating of a threonine residue. This is Serine/threonine-protein kinase PKH1 (PKH1) from Saccharomyces cerevisiae (strain ATCC 204508 / S288c) (Baker's yeast).